The chain runs to 520 residues: D-aminopeptidase (520 aa).

The active-site Nucleophile is serine 62. Lysine 65 serves as the catalytic Proton donor/acceptor. Residues glutamine 477–glutamate 487 are important for specificity. Aspartate 481 contacts substrate.

This sequence belongs to the peptidase S12 family. In terms of assembly, homodimer.

The enzyme catalyses Release of an N-terminal D-amino acid from a peptide, Xaa-|-Yaa-, in which Xaa is preferably D-Ala, D-Ser or D-Thr. D-amino acid amides and methyl esters also are hydrolyzed, as is glycine amide.. With respect to regulation, inhibited by beta-lactam compounds such as 6-aminopenicillic acid, 7-aminocephalosporanic acid, benzylpenicillin and ampicillin. Inhibited by p-chloromercuribenzoate. Hydrolyzes N-terminal residues in D-amino acid-containing peptides. This chain is D-aminopeptidase (dap), found in Brucella anthropi (Ochrobactrum anthropi).